Here is a 562-residue protein sequence, read N- to C-terminus: Vacuolar basic amino acid transporter 1 (562 aa).

At 1 to 30 (MQTLDETSNLLPPPEEAEAPPLEQKFHEYN) the chain is on the vacuolar side. The helical transmembrane segment at 31 to 51 (LALPKFPILFSLWLGSFLSSL) threads the bilayer. Residues 52–100 (DSTIVANIMNRVAEEFSESSKKQWIATSFLLTNTAFQPLYGKLSDITGR) are Cytoplasmic-facing. Residues 101–121 (KSALLTAQFFFGLGCLLTCFA) form a helical membrane-spanning segment. Over 122–131 (RNVTEFSIAR) the chain is Vacuolar. An N-linked (GlcNAc...) asparagine glycan is attached at Asn123. A helical membrane pass occupies residues 132–152 (AICGIGAGGLNAISSIAVSDI). The Cytoplasmic segment spans residues 153 to 166 (CTARERGVYQGYAN). A helical transmembrane segment spans residues 167 to 187 (IVFGFGQLLGAPLGGVFIETI). Residues 188-190 (GWR) are Vacuolar-facing. Residues 191-211 (ALFGIQVPVIMLCSVLAIKNI) form a helical membrane-spanning segment. Residues 212-232 (NIKLFHVPPMKERYTLKNLSR) lie on the Cytoplasmic side of the membrane. A helical transmembrane segment spans residues 233-253 (IDIFGSLSLVATISGVLFLCS). Residues 254-255 (SQ) are Vacuolar-facing. Residues 256–276 (LNKLYLALFTIGSFIVFILVE) form a helical membrane-spanning segment. Residues 277–292 (RYYATEKILPFELLTR) lie on the Cytoplasmic side of the membrane. The chain crosses the membrane as a helical span at residues 293–313 (SFCLSSAVTVISSFVVFGEIF). Residues 314-331 (RSPIYLQLLQNISVTKTG) are Vacuolar-facing. Asn324 carries N-linked (GlcNAc...) asparagine glycosylation. The chain crosses the membrane as a helical span at residues 332–352 (LFLIFPSISVAVGSLVTGWVL). Topologically, residues 353 to 365 (RNTKINLAHCAYQ) are cytoplasmic. Residues 366 to 386 (IIFGGMIMQLLGLGLGYFLLS) form a helical membrane-spanning segment. Topologically, residues 387–419 (HLNPDYTIYDMLESITFRSNSIWWKLIYVFASV) are vacuolar. The chain crosses the membrane as a helical span at residues 420-440 (LVSFGYACLLVATLVSIVFTV). Residues 441 to 448 (EKSQQGTM) are Cytoplasmic-facing. The chain crosses the membrane as a helical span at residues 449–469 (TGVFYLWRSIGNVLGASLTLV). The Vacuolar portion of the chain corresponds to 470–528 (SYENSLSSMLWNYMFKTKRDDEYHFTKKQYYSLINDSSYLRGPNFPTDIFVRILDVYKK). A glycan (N-linked (GlcNAc...) asparagine) is linked at Asn504. A helical membrane pass occupies residues 529–549 (AFLISYIPNIALAAVGIVLSL). At 550–562 (YLVKHTYKRSSSS) the chain is on the cytoplasmic side.

Belongs to the major facilitator superfamily.

The protein resides in the vacuole membrane. Transporter required for vacuolar uptake of at least histidine and lysine. This Saccharomyces cerevisiae (strain ATCC 204508 / S288c) (Baker's yeast) protein is Vacuolar basic amino acid transporter 1 (VBA1).